Here is a 305-residue protein sequence, read N- to C-terminus: Acetylglutamate kinase (305 aa).

Substrate contacts are provided by residues Gly-78–Gly-79, Arg-100, and Asn-202.

The protein belongs to the acetylglutamate kinase family. ArgB subfamily.

Its subcellular location is the cytoplasm. It catalyses the reaction N-acetyl-L-glutamate + ATP = N-acetyl-L-glutamyl 5-phosphate + ADP. It participates in amino-acid biosynthesis; L-arginine biosynthesis; N(2)-acetyl-L-ornithine from L-glutamate: step 2/4. Catalyzes the ATP-dependent phosphorylation of N-acetyl-L-glutamate. In Polaromonas sp. (strain JS666 / ATCC BAA-500), this protein is Acetylglutamate kinase.